We begin with the raw amino-acid sequence, 495 residues long: Probable leucine aminopeptidase 2 (495 aa).

A signal peptide spans M1 to G21. In terms of domain architecture, PA spans M130–T216. N-linked (GlcNAc...) asparagine glycans are attached at residues N142 and N235. Zn(2+) is bound by residues H259 and D271. N-linked (GlcNAc...) asparagine glycosylation occurs at N272. Residue E303 is the Proton acceptor of the active site. E304 and D332 together coordinate Zn(2+). N-linked (GlcNAc...) asparagine glycosylation occurs at N352. H430 provides a ligand contact to Zn(2+).

The protein belongs to the peptidase M28 family. M28A subfamily. In terms of assembly, monomer. Requires Zn(2+) as cofactor.

It is found in the secreted. Extracellular aminopeptidase that releases a wide variety of amino acids from natural peptides and contributes to pathogenicity. This is Probable leucine aminopeptidase 2 (LAP2) from Trichophyton verrucosum (strain HKI 0517).